The primary structure comprises 900 residues: Nonribosomal peptide synthetase AMT10 (900 aa).

Positions 284–686 (KQAQQNPAAM…ARRNGYIKLR (403 aa)) are adenylation. Residues 824–900 (ELQSDMERYL…QMARNCSLLD (77 aa)) enclose the Carrier domain. The residue at position 861 (serine 861) is an O-(pantetheine 4'-phosphoryl)serine.

The protein belongs to the NRP synthetase family.

The protein operates within mycotoxin biosynthesis. Its function is as follows. Nonribosomal peptide synthetase; part of the gene clusters that mediate the biosynthesis of AM-toxins, host-selective toxins (HSTs) causing Alternaria blotch on apple, a worldwide distributed disease. AM-toxins are cyclic depsipeptides containing the 3 residues 2-hydroxy-isovaleric acid (2-HIV), dehydroalanine, L-alanine which are common for all 3 AM-toxins I to III. The fourth precursor is L-alpha-amino-methoxyphenyl-valeric acid (L-Amv) for AM-toxin I, L-alpha-amino-phenyl-valeric acid (L-Apv) for AM-toxin II, and L-alpha-amino-hydroxyphenyl-valeric acid (L-Ahv) for AM-toxin III. AM-toxins have two target sites for affecting susceptible apple cells; they cause invagination of the plasma membrane and electrolyte loss and chloroplast disorganization. The non-ribosomal peptide synthetase AMT1 contains 4 catalytic modules and is responsible for activation of each residue in AM-toxin. The aldo-keto reductase AMT2 catalyzes the conversion of 2-keto-isovaleric acid (2-KIV) to 2-hydroxy-isovaleric acid (2-HIV), one of the precursor residues incorporated by AMT1 during AM-toxin biosynthesis, by reduction of its ketone to an alcohol. The cytochrome P450 monooxygenase AMT3 and the thioesterase AMT4 are also important for AM-toxin production, but their exact function within the AM-toxin biosynthesis are not known yet. Up to 21 proteins (including AMT1 to AMT4) are predicted to be involved in AM-toxin biosynthesis since their expression ishighly up-regulated in AM-toxin-producing cultures. The protein is Nonribosomal peptide synthetase AMT10 of Alternaria alternata (Alternaria rot fungus).